A 555-amino-acid chain; its full sequence is Luciferin 2-monooxygenase (555 aa).

Residues 1-11 form the signal peptide; that stretch reads MKIIILSVILA. 2 consecutive VWFD domains span residues 80–266 and 319–494; these read IECR…EYCK and GTCV…RLCN. 4 disulfides stabilise this stretch: cysteine 82–cysteine 222, cysteine 321–cysteine 454, cysteine 343–cysteine 493, and cysteine 352–cysteine 451. Asparagine 186 and asparagine 408 each carry an N-linked (GlcNAc...) asparagine glycan.

Post-translationally, the cysteine residues presumably exist in intramolecular disulfide bridges. The N-terminus is blocked.

It catalyses the reaction Cypridina luciferin + O2 = oxidized Cypridina luciferin + hnu + CO2. This Vargula hilgendorfii (Sea firefly) protein is Luciferin 2-monooxygenase.